The following is a 701-amino-acid chain: Elongation factor G 2 (701 aa).

In terms of domain architecture, tr-type G spans 8-291 (ERYRNIGISA…AVIDYLPSPA (284 aa)). GTP contacts are provided by residues 17-24 (AHIDAGKT), 88-92 (DTPGH), and 142-145 (NKMD).

The protein belongs to the TRAFAC class translation factor GTPase superfamily. Classic translation factor GTPase family. EF-G/EF-2 subfamily.

The protein localises to the cytoplasm. Catalyzes the GTP-dependent ribosomal translocation step during translation elongation. During this step, the ribosome changes from the pre-translocational (PRE) to the post-translocational (POST) state as the newly formed A-site-bound peptidyl-tRNA and P-site-bound deacylated tRNA move to the P and E sites, respectively. Catalyzes the coordinated movement of the two tRNA molecules, the mRNA and conformational changes in the ribosome. The polypeptide is Elongation factor G 2 (Burkholderia lata (strain ATCC 17760 / DSM 23089 / LMG 22485 / NCIMB 9086 / R18194 / 383)).